The primary structure comprises 539 residues: uncharacterized protein (539 aa).

5 consecutive transmembrane segments (helical) span residues 4–22 (LVEN…GLLL), 27–46 (IFGF…ALST), 56–78 (LIYV…PGFF), 90–112 (ALTL…VLNI), and 155–177 (PVVA…IAIF). 2 RCK C-terminal domains span residues 187–269 (KEAE…AIGE) and 271–352 (IDGD…LLGD). 4 helical membrane passes run 360–382 (FNLL…EFPL), 422–444 (LALR…GAGF), 453–475 (SLTI…LFVG), and 516–538 (YTSV…LFLL).

Belongs to the AAE transporter (TC 2.A.81) family.

It is found in the cell membrane. This is an uncharacterized protein from Corynebacterium glutamicum (strain ATCC 13032 / DSM 20300 / JCM 1318 / BCRC 11384 / CCUG 27702 / LMG 3730 / NBRC 12168 / NCIMB 10025 / NRRL B-2784 / 534).